Here is a 457-residue protein sequence, read N- to C-terminus: Cysteine--tRNA ligase (457 aa).

Cys27 serves as a coordination point for Zn(2+). Positions 29-39 (PTVYDFAHIGN) match the 'HIGH' region motif. 3 residues coordinate Zn(2+): Cys211, His236, and Glu240. The 'KMSKS' region signature appears at 269–273 (KMSKS). Lys272 is an ATP binding site.

This sequence belongs to the class-I aminoacyl-tRNA synthetase family. Monomer. Requires Zn(2+) as cofactor.

The protein localises to the cytoplasm. It carries out the reaction tRNA(Cys) + L-cysteine + ATP = L-cysteinyl-tRNA(Cys) + AMP + diphosphate. This is Cysteine--tRNA ligase from Ehrlichia ruminantium (strain Welgevonden).